The primary structure comprises 132 residues: UPF0299 membrane protein YohJ (132 aa).

At 1-6 (MSKTLN) the chain is on the periplasmic side. The helical transmembrane segment at 7-27 (IIWQYLRAFVLIYACLYAGIF) threads the bilayer. Residues 28–30 (IAS) are Cytoplasmic-facing. Residues 31–51 (LLPVTIPGSIIGMLILFVLLA) form a helical membrane-spanning segment. At 52-62 (LQILPAKWVNP) the chain is on the periplasmic side. Residues 63-83 (GCYVLIRYMALLFVPIGVGVM) form a helical membrane-spanning segment. Residues 84–92 (QYFDLLRAQ) lie on the Cytoplasmic side of the membrane. A helical membrane pass occupies residues 93–113 (FGPVVVSCAISTLVVFLVVSW). The Periplasmic portion of the chain corresponds to 114–132 (SSQLVHGERKVVGQKGSEE).

This sequence belongs to the UPF0299 family.

It is found in the cell inner membrane. The sequence is that of UPF0299 membrane protein YohJ (yohJ) from Escherichia coli O157:H7.